A 238-amino-acid chain; its full sequence is MFPAQEEADRTVFVGNLEARVREEILYELFLQAGPLTKVTLCKDRDGKPKSFGFVCFKHPESVSYAIALLNGIRLYGRPINVQYRFGSSRSSEPANQSFESCAKINSHSFRNDEMAGRPSFPVPFFPITSAALPQEYFFFQKMPWYAHSPVLQPPFCEMPAPLPNSVPGSCALNHSPGPEAGPSSYEWTHQPPSDPDLYPRNKRKRQRPDSDSDSSSEDKRGNEGSQKCRKCKKKKRY.

The 78-residue stretch at 10-87 folds into the RRM domain; it reads RTVFVGNLEA…RPINVQYRFG (78 aa). The tract at residues 172-238 is disordered; that stretch reads ALNHSPGPEA…CRKCKKKKRY (67 aa). Residues 202–237 carry the Bipartite nuclear localization signal motif; it reads NKRKRQRPDSDSDSSSEDKRGNEGSQKCRKCKKKKR. Positions 228-238 are enriched in basic residues; it reads KCRKCKKKKRY.

In terms of assembly, homodimer. In terms of tissue distribution, selectively expressed in brain, cerebellum and testis, and to a lower extent in kidney.

Its subcellular location is the nucleus. It is found in the nucleoplasm. The protein resides in the nucleus speckle. Tissue-specific splicing factor with potential implication in the regulation of alternative splicing during neuron and germ cell differentiation. Antagonizes SRSF1-mediated BCL-X splicing. May affect the choice of alternative 5' splice sites by binding to specific sequences in exons and antagonizing the SR protein SRSF1. This chain is Splicing regulator RBM11 (Rbm11), found in Mus musculus (Mouse).